The primary structure comprises 184 residues: Muscle-specific protein 20 (184 aa).

Residues 17-122 (PEMDKEAQEW…NTIFALGRAT (106 aa)) form the Calponin-homology (CH) domain. The stretch at 157-181 (VGLQAGSNKGATQAGQNLGAGRKIL) is one Calponin-like repeat.

The protein belongs to the calponin family. Found in synchronous muscle; not found in asynchronous indirect flight muscle.

This is Muscle-specific protein 20 (Mp20) from Drosophila melanogaster (Fruit fly).